Here is a 623-residue protein sequence, read N- to C-terminus: Actin-related protein 8 (623 aa).

The span at M1–R24 shows a compositional bias: basic and acidic residues. The segment at M1 to P29 is disordered. An ATP-binding site is contributed by D283–D286. The segment covering T428–A438 has biased composition (low complexity). Positions T428–C458 are disordered.

Belongs to the actin family. ARP8 subfamily. Component of the chromatin remodeling INO80 complex; specifically part of a complex module associated with the DBINO domain of INO80. Exists as monomers and dimers, but the dimer is most probably the biologically relevant form required for stable interactions with histones that exploits the twofold symmetry of the nucleosome core.

It localises to the nucleus. It is found in the chromosome. Functionally, plays an important role in the functional organization of mitotic chromosomes. Exhibits low basal ATPase activity, and unable to polymerize. Its function is as follows. Proposed core component of the chromatin remodeling INO80 complex which is involved in transcriptional regulation, DNA replication and probably DNA repair. Required for the recruitment of INO80 (and probably the INO80 complex) to sites of DNA damage Strongly prefer nucleosomes and H3-H4 tetramers over H2A-H2B dimers, suggesting it may act as a nucleosome recognition module within the complex. The sequence is that of Actin-related protein 8 (actr8) from Danio rerio (Zebrafish).